A 337-amino-acid chain; its full sequence is MIQKNWQELIKPNKVDFITHGSRTHATVVAEPLERGFGLTLGNALRRVLLSSLRGAAVTAVQIDGVLHEFSSIPGVREDVTDIVLNIKEIAIRMEGEGPKRMVVRKEGPGVVTAGDIQTVGDVEILNPEHVICTLDEGAEIRMEFTVNTGKGYVPADRNRAEDAPIGLIPVDSLYSPVRKVSYKIENTREGQVLDYDKLTLNIETNGSVTGEDAVAYAARILQDQLSIFVNFEEPQKEAPQEQVAELAFNPALLKKVDELELSVRSANCLKTDNIVYIGDLIQKTEAEMLRTPNFGRKSLNEIKEVLASMGLHLGMEIPAWPPENIEDLAKRYEDQY.

An alpha N-terminal domain (alpha-NTD) region spans residues 1–233 (MIQKNWQELI…DQLSIFVNFE (233 aa)). An alpha C-terminal domain (alpha-CTD) region spans residues 249-337 (FNPALLKKVD…DLAKRYEDQY (89 aa)).

This sequence belongs to the RNA polymerase alpha chain family. As to quaternary structure, homodimer. The RNAP catalytic core consists of 2 alpha, 1 beta, 1 beta' and 1 omega subunit. When a sigma factor is associated with the core the holoenzyme is formed, which can initiate transcription.

The enzyme catalyses RNA(n) + a ribonucleoside 5'-triphosphate = RNA(n+1) + diphosphate. Its function is as follows. DNA-dependent RNA polymerase catalyzes the transcription of DNA into RNA using the four ribonucleoside triphosphates as substrates. The protein is DNA-directed RNA polymerase subunit alpha of Brucella suis (strain ATCC 23445 / NCTC 10510).